The chain runs to 467 residues: ADP-dependent glucose/glucosamine kinase (467 aa).

Residues 10–467 enclose the ADPK domain; that stretch reads RLWKRLYVNA…FVSEFGMRKR (458 aa). Residues Asp42, Glu96, Gly120, 120–121, His184, and Asp211 each bind D-glucose; that span reads GQ. Position 279 (Glu279) interacts with Mg(2+). Asn305 contributes to the ADP binding site. A Mg(2+)-binding site is contributed by Glu308. Residues 352–353, Val440, and Gly450 contribute to the ADP site; that span reads HT. A D-glucose-binding site is contributed by Asp451. Mg(2+) is bound at residue Asp451. The Proton acceptor role is filled by Asp451.

This sequence belongs to the ADP-dependent glucokinase family. As to quaternary structure, monomer. It depends on Mg(2+) as a cofactor.

It localises to the cytoplasm. The catalysed reaction is D-glucose + ADP = D-glucose 6-phosphate + AMP + H(+). It catalyses the reaction D-glucosamine + ADP = D-glucosamine 6-phosphate + AMP + H(+). Its pathway is carbohydrate degradation; glycolysis. Its function is as follows. Catalyzes the ADP-dependent phosphorylation of D-glucose to D-glucose 6-phosphate and glucosamine to glucosamine 6-phosphate. Can also use CDP as the phosphoryl group donor and D-1,5-anhydroglucitol as the phosphoryl group acceptor. This chain is ADP-dependent glucose/glucosamine kinase, found in Thermococcus litoralis (strain ATCC 51850 / DSM 5473 / JCM 8560 / NS-C).